The sequence spans 874 residues: Coatomer subunit gamma-1 (874 aa).

The segment covering 1-11 (MLKKFDKKDEE) has biased composition (basic and acidic residues). Residues 1-21 (MLKKFDKKDEESGGGSNPFQH) are disordered. HEAT repeat units follow at residues 64 to 101 (TEATEAFFAMTKLFQSNDPTLRRMCYLTIKEMSCIAED), 283 to 320 (KELAPAVSVLQLFCSSPKAALRYAAVRTLNKVAMKHPS), 322 to 355 (VTACNLDLENLVTDANRSIATLAITTLLKTGSEG), and 356 to 392 (SIDRLMKQISSFMSEISDEFKVVVVQAISALCQKYPR). Thr594 carries the post-translational modification Phosphothreonine. The interaction with ZNF289/ARFGAP2 stretch occupies residues 609–874 (RQEIFQEQLA…PVDIVLASVG (266 aa)).

The protein belongs to the COPG family. In terms of assembly, oligomeric complex that consists of at least the alpha, beta, beta', gamma, delta, epsilon and zeta subunits. Interacts with ZNF289/ARFGAP2 through its C-terminal appendage domain. Interacts with EGFR upon EGF treatment; interaction is essential for regulation of EGF-dependent nuclear transport of EGFR by retrograde trafficking from the Golgi to the ER. The coatomer interacts with KDEL receptors; the interaction is important for retrograde trafficking of KDEL-bearing proteins from the Golgi to the endoplasmic reticulum. Interacts with COPB1. Interacts with TMED10 (via C-terminus). Interacts with TMED2, TMED3, TMED7 and TMED9.

It localises to the cytoplasm. It is found in the cytosol. Its subcellular location is the golgi apparatus membrane. The protein localises to the cytoplasmic vesicle. The protein resides in the COPI-coated vesicle membrane. Its function is as follows. The coatomer is a cytosolic protein complex that binds to dilysine motifs and reversibly associates with Golgi non-clathrin-coated vesicles, which further mediate biosynthetic protein transport from the ER, via the Golgi up to the trans Golgi network. Coatomer complex is required for budding from Golgi membranes, and is essential for the retrograde Golgi-to-ER transport of dilysine-tagged proteins. In mammals, the coatomer can only be recruited by membranes associated to ADP-ribosylation factors (ARFs), which are small GTP-binding proteins; the complex also influences the Golgi structural integrity, as well as the processing, activity, and endocytic recycling of LDL receptors. Required for limiting lipid storage in lipid droplets. Involved in lipid homeostasis by regulating the presence of perilipin family members PLIN2 and PLIN3 at the lipid droplet surface and promoting the association of adipocyte triglyceride lipase (PNPLA2) with the lipid droplet surface to mediate lipolysis. The sequence is that of Coatomer subunit gamma-1 (COPG1) from Bos taurus (Bovine).